We begin with the raw amino-acid sequence, 465 residues long: UDP-N-acetylmuramate--L-alanine ligase (465 aa).

114–120 contributes to the ATP binding site; sequence GAHGKTT.

It belongs to the MurCDEF family.

The protein resides in the cytoplasm. It carries out the reaction UDP-N-acetyl-alpha-D-muramate + L-alanine + ATP = UDP-N-acetyl-alpha-D-muramoyl-L-alanine + ADP + phosphate + H(+). It functions in the pathway cell wall biogenesis; peptidoglycan biosynthesis. Its function is as follows. Cell wall formation. The protein is UDP-N-acetylmuramate--L-alanine ligase of Syntrophomonas wolfei subsp. wolfei (strain DSM 2245B / Goettingen).